Reading from the N-terminus, the 286-residue chain is Mating type protein A-1 (286 aa).

The alpha box DNA-binding region spans 40–95 (AAKKKVNGFMSFRSYYSPLFSQLPQKERSPFMTILWQHDPFHNEWNFMCSVYSSIR).

It belongs to the MATALPHA1 family.

It is found in the nucleus. Functionally, required for expression of the heterokaryon incompatibility and sexual functions. The sequence is that of Mating type protein A-1 (MTA-1) from Neurospora africana.